An 89-amino-acid chain; its full sequence is Small ribosomal subunit protein uS17 (89 aa).

It belongs to the universal ribosomal protein uS17 family. Part of the 30S ribosomal subunit.

In terms of biological role, one of the primary rRNA binding proteins, it binds specifically to the 5'-end of 16S ribosomal RNA. The chain is Small ribosomal subunit protein uS17 from Variovorax paradoxus (strain S110).